A 603-amino-acid chain; its full sequence is NADH-ubiquinone oxidoreductase chain 5 (603 aa).

15 helical membrane-spanning segments follow: residues 38 to 58 (SIVA…MCLD), 87 to 107 (MMFI…SLWY), 122 to 142 (LIFL…QLFI), 144 to 160 (WEGV…WWYA), 171 to 191 (AILY…WFIL), 211 to 233 (TPLL…HPWL), 241 to 261 (TPVS…FLLI), 272 to 292 (LIQT…AVCA), 301 to 320 (IVAF…IGIN), 325 to 347 (AFLH…GSII), 370 to 390 (STSL…TGFY), 407 to 429 (WALS…MILL), 458 to 478 (AAGS…ASPF), 482 to 502 (IPLY…LTAL), and 582 to 602 (GMIK…LLLI).

This sequence belongs to the complex I subunit 5 family. As to quaternary structure, core subunit of respiratory chain NADH dehydrogenase (Complex I) which is composed of 45 different subunits.

It localises to the mitochondrion inner membrane. It catalyses the reaction a ubiquinone + NADH + 5 H(+)(in) = a ubiquinol + NAD(+) + 4 H(+)(out). Its function is as follows. Core subunit of the mitochondrial membrane respiratory chain NADH dehydrogenase (Complex I) which catalyzes electron transfer from NADH through the respiratory chain, using ubiquinone as an electron acceptor. Essential for the catalytic activity and assembly of complex I. The chain is NADH-ubiquinone oxidoreductase chain 5 (MT-ND5) from Homo sapiens (Human).